A 242-amino-acid chain; its full sequence is Probable porphobilinogen deaminase (242 aa).

It belongs to the HMBS family.

It catalyses the reaction 4 porphobilinogen + H2O = hydroxymethylbilane + 4 NH4(+). It participates in porphyrin-containing compound metabolism; protoporphyrin-IX biosynthesis; coproporphyrinogen-III from 5-aminolevulinate: step 2/4. In terms of biological role, tetrapolymerization of the monopyrrole PBG into the hydroxymethylbilane pre-uroporphyrinogen in several discrete steps. This is Probable porphobilinogen deaminase (hemC) from Chlamydia muridarum (strain MoPn / Nigg).